The primary structure comprises 298 residues: Inosose dehydratase (298 aa).

The protein belongs to the IolE/MocC family. The cofactor is glutathione. Co(2+) is required as a cofactor. It depends on Mn(2+) as a cofactor.

It carries out the reaction scyllo-inosose = 3D-3,5/4-trihydroxycyclohexane-1,2-dione + H2O. Functionally, catalyzes the dehydration of inosose (2-keto-myo-inositol, 2KMI or 2,4,6/3,5-pentahydroxycyclohexanone) to 3D-(3,5/4)-trihydroxycyclohexane-1,2-dione (D-2,3-diketo-4-deoxy-epi-inositol). The chain is Inosose dehydratase from Serratia proteamaculans (strain 568).